Consider the following 266-residue polypeptide: Killer cell lectin-like receptor 6 (266 aa).

Over 1–44 (MSEPEVTYSTVRLHKSSRLQKLVRHEETQGPREAGYRKCSVCWQ) the chain is Cytoplasmic. Residues 45–66 (LIVKALGILCFLLLITVAVLAV) form a helical; Signal-anchor for type II membrane protein membrane-spanning segment. The Extracellular segment spans residues 67–266 (KIFQYGQHNQ…CGKKLDKFPH (200 aa)). Asn-87 and Asn-104 each carry an N-linked (GlcNAc...) asparagine glycan. Residues 143 to 261 (GVKYWFCYRT…SHYCICGKKL (119 aa)) form the C-type lectin domain. Disulfide bonds link Cys-149–Cys-154, Cys-167–Cys-255, Cys-171–Cys-257, and Cys-236–Cys-249.

In terms of assembly, homodimer; disulfide-linked.

Its subcellular location is the membrane. In terms of biological role, receptor on natural killer (NK) cells for class I MHC. This Mus musculus (Mouse) protein is Killer cell lectin-like receptor 6 (Klra6).